The chain runs to 1698 residues: Cullin-7 (1698 aa).

Positions 315–357 (QASDRPRSSARSPGSIFQPQLADVSPGLPAAQAQPSFRRSRRF) are disordered. At S339 the chain carries Phosphoserine. The CPH domain occupies 360–433 (RSEFASGNTY…HWHMLEILGF (74 aa)). Residues 601-611 (SEDAAKVEAKE) are compositionally biased toward basic and acidic residues. Residues 601 to 623 (SEDAAKVEAKEPPSQSPNTPLQR) form a disordered region. The region spanning 814–993 (PINIPFFDVF…HTRLFYMVRA (180 aa)) is the DOC domain. The tract at residues 1345–1370 (GASGKEHKSEKEEEAGAAAVVDVAEG) is disordered. K1576 participates in a covalent cross-link: Glycyl lysine isopeptide (Lys-Gly) (interchain with G-Cter in NEDD8).

This sequence belongs to the cullin family. Component of the 3M complex, composed of core components CUL7, CCDC8 and OBSL1. Component of the Cul7-RING(FBXW8) complex consisting of CUL7, RBX1, SKP1 and FBXW8. Within the Cul7-RING(FBXW8) complex interacts with FBXW8 and RBX1, but not with SKP1. Interacts with CUL1 (via the C-terminal domain); the interaction seems to be mediated by FBXW8; it is likely specific to FBXW8, but not other F-box proteins. Interacts (via the CPH domain) with p53/TP53; the interaction preferentially involves tetrameric and dimeric p53/TP53; this interaction recruits p53/TP53 for ubiquitination by neddylated CUL1-RBX1. The CUL7-CUL9 heterodimer seems to interact specifically with p53/TP53. Interacts with FBXW8; interaction is mutually exclusive of binding to CUL9 or p53/TP53. Interacts with CUL9; leading to inhibited CUL9 activity. Interacts with OBSL1. Interacts (as part of the 3M complex) with HDAC4 and HDAC5; it is negatively regulated by ANKRA2. In terms of assembly, (Microbial infection) Interacts with SV40 Large T antigen; this interaction seems to inhibit CUL7. According to a report, may not be neddylated despite the conserved consensus site for neddylation at Lys-1576. Structural study of the Cul7-RING(FBXW8) reveals that both CUL7 and RBX1 are in orientations that are incompatible with neddylation. In terms of tissue distribution, highly expressed in fetal kidney and adult skeletal muscle. Also abundant in fetal brain, as well as in adult pancreas, kidney, placenta and heart. Detected in trophoblasts, lymphoblasts, osteoblasts, chondrocytes and skin fibroblasts.

It is found in the cytoplasm. The protein localises to the cytoskeleton. Its subcellular location is the microtubule organizing center. It localises to the centrosome. The protein resides in the perinuclear region. It is found in the golgi apparatus. The protein operates within protein modification; protein ubiquitination. Functionally, core component of the 3M and Cul7-RING(FBXW8) complexes, which mediate the ubiquitination and subsequent proteasomal degradation of target proteins. Core component of the 3M complex, a complex required to regulate microtubule dynamics and genome integrity. It is unclear how the 3M complex regulates microtubules, it could act by controlling the level of a microtubule stabilizer. The Cul7-RING(FBXW8) complex alone lacks ubiquitination activity and does not promote polyubiquitination and proteasomal degradation of p53/TP53. However it mediates recruitment of p53/TP53 for ubiquitination by neddylated CUL1-RBX1. Interaction with CUL9 is required to inhibit CUL9 activity and ubiquitination of BIRC5. The Cul7-RING(FBXW8) complex also mediates ubiquitination and consequent degradation of target proteins such as GORASP1, IRS1 and MAP4K1/HPK1. Ubiquitination of GORASP1 regulates Golgi morphogenesis and dendrite patterning in brain. Mediates ubiquitination and degradation of IRS1 in a mTOR-dependent manner: the Cul7-RING(FBXW8) complex recognizes and binds IRS1 previously phosphorylated by S6 kinase (RPS6KB1 or RPS6KB2). The Cul7-RING(FBXW8) complex also mediates ubiquitination of MAP4K1/HPK1: recognizes and binds autophosphorylated MAP4K1/HPK1, leading to its degradation, thereby affecting cell proliferation and differentiation. Acts as a regulator in trophoblast cell epithelial-mesenchymal transition and placental development. While the Cul7-RING(FBXW8) and the 3M complexes are associated and involved in common processes, CUL7 and the Cul7-RING(FBXW8) complex may have additional functions. Probably plays a role in the degradation of proteins involved in endothelial proliferation and/or differentiation. The protein is Cullin-7 (CUL7) of Homo sapiens (Human).